Consider the following 471-residue polypeptide: Glutamate--tRNA ligase (471 aa).

The 'HIGH' region signature appears at 9-19; the sequence is PSPTGYLHVGG. Zn(2+) contacts are provided by Cys98, Cys100, Cys125, and His127. Positions 237–241 match the 'KMSKS' region motif; that stretch reads KLSKR. Lys240 is an ATP binding site.

It belongs to the class-I aminoacyl-tRNA synthetase family. Glutamate--tRNA ligase type 1 subfamily. Monomer. Zn(2+) is required as a cofactor.

The protein localises to the cytoplasm. The catalysed reaction is tRNA(Glu) + L-glutamate + ATP = L-glutamyl-tRNA(Glu) + AMP + diphosphate. Its function is as follows. Catalyzes the attachment of glutamate to tRNA(Glu) in a two-step reaction: glutamate is first activated by ATP to form Glu-AMP and then transferred to the acceptor end of tRNA(Glu). The sequence is that of Glutamate--tRNA ligase from Salmonella paratyphi A (strain ATCC 9150 / SARB42).